Consider the following 408-residue polypeptide: Metacaspase-1B (408 aa).

The interval methionine 1–asparagine 98 is disordered. Composition is skewed to pro residues over residues tryptophan 24–proline 49 and serine 56–proline 66. Residues histidine 199 and cysteine 255 contribute to the active site.

Belongs to the peptidase C14B family.

Functionally, involved in cell death (apoptosis). Required for the apoptotic-like loss of membrane phospholipid asymmetry at stationary phase and facilitates growth under conditions of endoplasmic reticulum stress. This Aspergillus fumigatus (strain CBS 144.89 / FGSC A1163 / CEA10) (Neosartorya fumigata) protein is Metacaspase-1B (casB).